The chain runs to 84 residues: MKPGIHPSYGPVVFRDKAADFAFLTRSTMTSDRTVAWEDGNTYPVVDVEISSASHPFYTGTARVLDTAGRVERFERRYGRGGAR.

This sequence belongs to the bacterial ribosomal protein bL31 family. Type B subfamily. Part of the 50S ribosomal subunit.

In Streptomyces griseus subsp. griseus (strain JCM 4626 / CBS 651.72 / NBRC 13350 / KCC S-0626 / ISP 5235), this protein is Large ribosomal subunit protein bL31B.